Reading from the N-terminus, the 271-residue chain is Tryptophan synthase alpha chain (271 aa).

Residues glutamate 49 and aspartate 60 each act as proton acceptor in the active site.

The protein belongs to the TrpA family. Tetramer of two alpha and two beta chains.

It catalyses the reaction (1S,2R)-1-C-(indol-3-yl)glycerol 3-phosphate + L-serine = D-glyceraldehyde 3-phosphate + L-tryptophan + H2O. It participates in amino-acid biosynthesis; L-tryptophan biosynthesis; L-tryptophan from chorismate: step 5/5. Functionally, the alpha subunit is responsible for the aldol cleavage of indoleglycerol phosphate to indole and glyceraldehyde 3-phosphate. The protein is Tryptophan synthase alpha chain of Burkholderia thailandensis (strain ATCC 700388 / DSM 13276 / CCUG 48851 / CIP 106301 / E264).